A 234-amino-acid polypeptide reads, in one-letter code: 2,3,4,5-tetrahydropyridine-2,6-dicarboxylate N-acetyltransferase (234 aa).

Belongs to the transferase hexapeptide repeat family. DapH subfamily.

It catalyses the reaction (S)-2,3,4,5-tetrahydrodipicolinate + acetyl-CoA + H2O = L-2-acetamido-6-oxoheptanedioate + CoA. It participates in amino-acid biosynthesis; L-lysine biosynthesis via DAP pathway; LL-2,6-diaminopimelate from (S)-tetrahydrodipicolinate (acetylase route): step 1/3. Its function is as follows. Catalyzes the transfer of an acetyl group from acetyl-CoA to tetrahydrodipicolinate. The protein is 2,3,4,5-tetrahydropyridine-2,6-dicarboxylate N-acetyltransferase of Ligilactobacillus salivarius (strain UCC118) (Lactobacillus salivarius).